We begin with the raw amino-acid sequence, 339 residues long: Scoulerine-9-O-methyltransferase 3 (339 aa).

M161 provides a ligand contact to S-adenosyl-L-methionine. A substrate-binding site is contributed by D164. Residues T165, G191, D214, 228 to 229 (DV), and K242 each bind S-adenosyl-L-methionine. A substrate-binding site is contributed by 243-247 (SILHE). The Proton acceptor role is filled by H246.

The protein belongs to the class I-like SAM-binding methyltransferase superfamily. Cation-independent O-methyltransferase family. COMT subfamily. Homodimer. Forms heterodimer with SOMT2. The heterodimer SOMT2-SOMT3 possesses 3-O-acetyl-4'-O-demethylpapaveroxine 4'-O-methyltransferase activity, where SOMT2 is the catalytic subunit. As to expression, highly expressed in capsules. Expressed is stems. Expressed at low levels in roots.

It carries out the reaction (S)-scoulerine + S-adenosyl-L-methionine = (S)-tetrahydrocolumbamine + S-adenosyl-L-homocysteine + H(+). It functions in the pathway alkaloid biosynthesis. Functionally, methyltransferase involved in the biosynthesis of the benzylisoquinoline alkaloid noscapine. Catalyzes the conversion of (S)-scoulerine to (S)-tetrahydrocolumbamine. This chain is Scoulerine-9-O-methyltransferase 3, found in Papaver somniferum (Opium poppy).